Consider the following 460-residue polypeptide: GTPase Der (460 aa).

EngA-type G domains lie at 2–166 and 175–353; these read KTIA…AEER and TRIA…QERK. GTP is bound by residues 8–15, 55–59, 118–121, 181–188, 228–232, and 293–296; these read GRPNVGKS, DTGGL, NKLD, GQPNAGKS, DTAGL, and NKID. A KH-like domain is found at 354-446; that stretch reads KRIPTHRLTQ…LLWKWRKAEG (93 aa).

It belongs to the TRAFAC class TrmE-Era-EngA-EngB-Septin-like GTPase superfamily. EngA (Der) GTPase family. In terms of assembly, associates with the 50S ribosomal subunit.

Its function is as follows. GTPase that plays an essential role in the late steps of ribosome biogenesis. This chain is GTPase Der, found in Methylacidiphilum infernorum (isolate V4) (Methylokorus infernorum (strain V4)).